The sequence spans 416 residues: Serine hydroxymethyltransferase (416 aa).

(6S)-5,6,7,8-tetrahydrofolate contacts are provided by residues leucine 121 and 125 to 127; that span reads GHL. Lysine 229 is subject to N6-(pyridoxal phosphate)lysine. (6S)-5,6,7,8-tetrahydrofolate contacts are provided by residues glutamate 245 and 354–356; that span reads SPF.

It belongs to the SHMT family. Homodimer. Pyridoxal 5'-phosphate serves as cofactor.

Its subcellular location is the cytoplasm. It catalyses the reaction (6R)-5,10-methylene-5,6,7,8-tetrahydrofolate + glycine + H2O = (6S)-5,6,7,8-tetrahydrofolate + L-serine. It participates in one-carbon metabolism; tetrahydrofolate interconversion. Its pathway is amino-acid biosynthesis; glycine biosynthesis; glycine from L-serine: step 1/1. Catalyzes the reversible interconversion of serine and glycine with tetrahydrofolate (THF) serving as the one-carbon carrier. This reaction serves as the major source of one-carbon groups required for the biosynthesis of purines, thymidylate, methionine, and other important biomolecules. Also exhibits THF-independent aldolase activity toward beta-hydroxyamino acids, producing glycine and aldehydes, via a retro-aldol mechanism. The protein is Serine hydroxymethyltransferase of Aliivibrio fischeri (strain ATCC 700601 / ES114) (Vibrio fischeri).